We begin with the raw amino-acid sequence, 420 residues long: Senescence-associated protein SPA15, chloroplastic (420 aa).

A chloroplast-targeting transit peptide spans 1–68; the sequence is MAKPNGIIYS…YIATRGSSLR (68 aa). Residues 85–111 form a disordered region; the sequence is EYRDSSDTSSMQGKDKDPASLGKSGTP.

This sequence belongs to the ATA15/OSA15 family. As to expression, expressed in leaves.

Its subcellular location is the plastid. It localises to the chloroplast. May be involved in the regulation of leaf senescence. The sequence is that of Senescence-associated protein SPA15, chloroplastic from Ipomoea batatas (Sweet potato).